The sequence spans 342 residues: N-acetyl-gamma-glutamyl-phosphate reductase (342 aa).

Cys149 is an active-site residue.

The protein belongs to the NAGSA dehydrogenase family. Type 1 subfamily.

It localises to the cytoplasm. The catalysed reaction is N-acetyl-L-glutamate 5-semialdehyde + phosphate + NADP(+) = N-acetyl-L-glutamyl 5-phosphate + NADPH + H(+). Its pathway is amino-acid biosynthesis; L-arginine biosynthesis; N(2)-acetyl-L-ornithine from L-glutamate: step 3/4. Its function is as follows. Catalyzes the NADPH-dependent reduction of N-acetyl-5-glutamyl phosphate to yield N-acetyl-L-glutamate 5-semialdehyde. In Cereibacter sphaeroides (strain ATCC 17025 / ATH 2.4.3) (Rhodobacter sphaeroides), this protein is N-acetyl-gamma-glutamyl-phosphate reductase.